The following is a 163-amino-acid chain: Probable metallophosphoesterase MG207 (163 aa).

7 residues coordinate Mn(2+): D9, H11, D34, N53, H75, H107, and H109.

The protein belongs to the metallophosphoesterase superfamily. YfcE family. The cofactor is Mn(2+).

This is Probable metallophosphoesterase MG207 from Mycoplasma genitalium (strain ATCC 33530 / DSM 19775 / NCTC 10195 / G37) (Mycoplasmoides genitalium).